The chain runs to 719 residues: Phosphoribosylformylglycinamidine synthase subunit PurL (719 aa).

The active site involves H47. 2 residues coordinate ATP: Y50 and K89. E91 is a Mg(2+) binding site. Residues 92 to 95 (SHNH) and R114 contribute to the substrate site. H93 acts as the Proton acceptor in catalysis. D115 serves as a coordination point for Mg(2+). Q238 is a substrate binding site. D266 contacts Mg(2+). Residue 310–312 (ESQ) coordinates substrate. Residues D488 and G525 each coordinate ATP. N526 provides a ligand contact to Mg(2+). Substrate is bound at residue S528.

This sequence belongs to the FGAMS family. Monomer. Part of the FGAM synthase complex composed of 1 PurL, 1 PurQ and 2 PurS subunits.

It is found in the cytoplasm. It catalyses the reaction N(2)-formyl-N(1)-(5-phospho-beta-D-ribosyl)glycinamide + L-glutamine + ATP + H2O = 2-formamido-N(1)-(5-O-phospho-beta-D-ribosyl)acetamidine + L-glutamate + ADP + phosphate + H(+). The protein operates within purine metabolism; IMP biosynthesis via de novo pathway; 5-amino-1-(5-phospho-D-ribosyl)imidazole from N(2)-formyl-N(1)-(5-phospho-D-ribosyl)glycinamide: step 1/2. Functionally, part of the phosphoribosylformylglycinamidine synthase complex involved in the purines biosynthetic pathway. Catalyzes the ATP-dependent conversion of formylglycinamide ribonucleotide (FGAR) and glutamine to yield formylglycinamidine ribonucleotide (FGAM) and glutamate. The FGAM synthase complex is composed of three subunits. PurQ produces an ammonia molecule by converting glutamine to glutamate. PurL transfers the ammonia molecule to FGAR to form FGAM in an ATP-dependent manner. PurS interacts with PurQ and PurL and is thought to assist in the transfer of the ammonia molecule from PurQ to PurL. In Cereibacter sphaeroides (strain ATCC 17025 / ATH 2.4.3) (Rhodobacter sphaeroides), this protein is Phosphoribosylformylglycinamidine synthase subunit PurL.